Reading from the N-terminus, the 87-residue chain is Small ribosomal subunit protein bS20 (87 aa).

Positions 1-26 (MANIKSAKKRAIQSEKARKHNASRRS) are disordered.

This sequence belongs to the bacterial ribosomal protein bS20 family.

Functionally, binds directly to 16S ribosomal RNA. This Escherichia coli O17:K52:H18 (strain UMN026 / ExPEC) protein is Small ribosomal subunit protein bS20.